Consider the following 159-residue polypeptide: Cytochrome c nitrite reductase subunit NrfH (159 aa).

The Cytoplasmic segment spans residues 2-14 (SEEKSRNGPARLK). A helical; Signal-anchor for type II membrane protein membrane pass occupies residues 15 to 33 (LVLGGATLGVVALATVAFG). The Periplasmic portion of the chain corresponds to 34-159 (MKYTDQRPFC…PISTREVADE (126 aa)). Residues C43, C46, M49, H61, and C66 each contribute to the heme site. N67 contacts a menaquinol. Residues C69 and H70 each contribute to the heme site. Residues K82 and D89 each coordinate a menaquinol. Residue D89 participates in heme binding. Residues 99–100 (GD) are interaction with NrfA. The heme site is built by C116, C119, H120, C136, C139, H140, and H145. The segment at 123–158 (TNVEVASMEAKKYCTDCHRNVQHMRMKPISTREVAD) is interaction with NrfA.

The protein belongs to the NapC/NirT/NrfH family. Component of the NrfHA cytochrome c nitrite reductase complex composed of 4 NrfA catalytic subunits and 2 NrfH quinone-binding subunits. Interacts with NrfA homodimer. Heme serves as cofactor.

The protein localises to the cell inner membrane. In terms of biological role, electron donor subunit of the cytochrome c nitrite reductase holocomplex NrfHA. Acquires electrons from the menaquinone pool and mediates their transfer to the catalytic subunit NrfA in an anaerobic respiratory process of nitrite. The other biological function of the NrfHA holocomplex is to detoxify nitrite. This function is essential for the survival of this organism as it enables it to overcome inhibition by nitrite, which is produced by other organisms living in the same environment. In Nitratidesulfovibrio vulgaris (strain ATCC 29579 / DSM 644 / CCUG 34227 / NCIMB 8303 / VKM B-1760 / Hildenborough) (Desulfovibrio vulgaris), this protein is Cytochrome c nitrite reductase subunit NrfH.